The chain runs to 122 residues: Large ribosomal subunit protein uL14 (122 aa).

This sequence belongs to the universal ribosomal protein uL14 family. Part of the 50S ribosomal subunit. Forms a cluster with proteins L3 and L19. In the 70S ribosome, L14 and L19 interact and together make contacts with the 16S rRNA in bridges B5 and B8.

Binds to 23S rRNA. Forms part of two intersubunit bridges in the 70S ribosome. The sequence is that of Large ribosomal subunit protein uL14 from Trichodesmium erythraeum (strain IMS101).